Reading from the N-terminus, the 1545-residue chain is Pentafunctional AROM polypeptide (1545 aa).

The interval 1-383 (MSGLIEKVSI…YEPKASYVND (383 aa)) is 3-dehydroquinate synthase. Residues 44–46 (DSN), 82–85 (EANK), 113–115 (GGV), and Asp-118 contribute to the NAD(+) site. Arg-129 is a 7-phospho-2-dehydro-3-deoxy-D-arabino-heptonate binding site. An NAD(+)-binding site is contributed by 138–139 (TS). Residues Asp-145 and Lys-151 each contribute to the 7-phospho-2-dehydro-3-deoxy-D-arabino-heptonate site. Residue Lys-160 coordinates NAD(+). Asn-161 lines the 7-phospho-2-dehydro-3-deoxy-D-arabino-heptonate pocket. NAD(+) is bound by residues 178-181 (FLET) and Asn-189. Zn(2+) is bound at residue Glu-193. Residues 193 to 196 (EVVK) and Lys-249 each bind 7-phospho-2-dehydro-3-deoxy-D-arabino-heptonate. Residue Glu-259 is the Proton acceptor; for 3-dehydroquinate synthase activity of the active site. 7-phospho-2-dehydro-3-deoxy-D-arabino-heptonate is bound by residues 263-267 (RNLLN) and His-270. Residue His-270 coordinates Zn(2+). The Proton acceptor; for 3-dehydroquinate synthase activity role is filled by His-274. Positions 286 and 355 each coordinate 7-phospho-2-dehydro-3-deoxy-D-arabino-heptonate. His-286 is a binding site for Zn(2+). The interval 396–840 (VKDFNSAPST…WDILHTTFNV (445 aa)) is EPSP synthase. The active-site For EPSP synthase activity is the Cys-822. A shikimate kinase region spans residues 859–1049 (DKSIIVIGMR…IPNGRSAFVC (191 aa)). 866–873 (GMRAAGKS) contributes to the ATP binding site. Residues 1050–1261 (LTYEDLAPVS…AAPGQLTLKE (212 aa)) are 3-dehydroquinase. His-1166 acts as the Proton acceptor; for 3-dehydroquinate dehydratase activity in catalysis. Lys-1195 functions as the Schiff-base intermediate with substrate; for 3-dehydroquinate dehydratase activity in the catalytic mechanism. Residues 1274-1545 (RKKFYIVGKP…GYQFSSHIDL (272 aa)) form a shikimate dehydrogenase region.

The protein in the N-terminal section; belongs to the sugar phosphate cyclases superfamily. Dehydroquinate synthase family. This sequence in the 2nd section; belongs to the EPSP synthase family. It in the 3rd section; belongs to the shikimate kinase family. In the 4th section; belongs to the type-I 3-dehydroquinase family. The protein in the C-terminal section; belongs to the shikimate dehydrogenase family. In terms of assembly, homodimer. The cofactor is Zn(2+).

The protein resides in the cytoplasm. It carries out the reaction 7-phospho-2-dehydro-3-deoxy-D-arabino-heptonate = 3-dehydroquinate + phosphate. The catalysed reaction is 3-dehydroquinate = 3-dehydroshikimate + H2O. The enzyme catalyses shikimate + NADP(+) = 3-dehydroshikimate + NADPH + H(+). It catalyses the reaction shikimate + ATP = 3-phosphoshikimate + ADP + H(+). It carries out the reaction 3-phosphoshikimate + phosphoenolpyruvate = 5-O-(1-carboxyvinyl)-3-phosphoshikimate + phosphate. The protein operates within metabolic intermediate biosynthesis; chorismate biosynthesis; chorismate from D-erythrose 4-phosphate and phosphoenolpyruvate: step 2/7. Its pathway is metabolic intermediate biosynthesis; chorismate biosynthesis; chorismate from D-erythrose 4-phosphate and phosphoenolpyruvate: step 3/7. It participates in metabolic intermediate biosynthesis; chorismate biosynthesis; chorismate from D-erythrose 4-phosphate and phosphoenolpyruvate: step 4/7. It functions in the pathway metabolic intermediate biosynthesis; chorismate biosynthesis; chorismate from D-erythrose 4-phosphate and phosphoenolpyruvate: step 5/7. The protein operates within metabolic intermediate biosynthesis; chorismate biosynthesis; chorismate from D-erythrose 4-phosphate and phosphoenolpyruvate: step 6/7. Functionally, the AROM polypeptide catalyzes 5 consecutive enzymatic reactions in prechorismate polyaromatic amino acid biosynthesis. This chain is Pentafunctional AROM polypeptide, found in Komagataella phaffii (strain GS115 / ATCC 20864) (Yeast).